The chain runs to 225 residues: Two-component response regulator PhoP (225 aa).

The Response regulatory domain maps to 2-116; sequence KLLVVEDEAL…ELEARLNALL (115 aa). Position 51 is a 4-aspartylphosphate (aspartate 51). The segment at residues 124-222 is a DNA-binding region (ompR/PhoB-type); sequence QSTIEAGPLV…VRGQGYLFTE (99 aa).

Member of the two-component regulatory system PhoP/PhoQ that plays a role in the regulation of resistance towards polymyxin B and cationic antimicrobial peptides in response to limiting concentrations of Mg(2+). Functions as a transcriptional activator by direct binding to a cis-acting sequence upstream of the target gene promoters including oprH and pmrH promoters. The polypeptide is Two-component response regulator PhoP (phoP) (Pseudomonas aeruginosa (strain ATCC 15692 / DSM 22644 / CIP 104116 / JCM 14847 / LMG 12228 / 1C / PRS 101 / PAO1)).